Reading from the N-terminus, the 272-residue chain is Phosphatidylglycerol--prolipoprotein diacylglyceryl transferase (272 aa).

7 helical membrane-spanning segments follow: residues 17-37 (LQVH…WGLA), 55-75 (LVFY…VLFY), 90-110 (VWTG…AMLF), 125-145 (FVAP…FIGG), 174-194 (PSQI…LWWF), 202-222 (MAVS…MEFF), and 230-250 (GFIL…MLLI). Arg-138 is an a 1,2-diacyl-sn-glycero-3-phospho-(1'-sn-glycerol) binding site.

Belongs to the Lgt family.

The protein localises to the cell inner membrane. It catalyses the reaction L-cysteinyl-[prolipoprotein] + a 1,2-diacyl-sn-glycero-3-phospho-(1'-sn-glycerol) = an S-1,2-diacyl-sn-glyceryl-L-cysteinyl-[prolipoprotein] + sn-glycerol 1-phosphate + H(+). It functions in the pathway protein modification; lipoprotein biosynthesis (diacylglyceryl transfer). In terms of biological role, catalyzes the transfer of the diacylglyceryl group from phosphatidylglycerol to the sulfhydryl group of the N-terminal cysteine of a prolipoprotein, the first step in the formation of mature lipoproteins. The protein is Phosphatidylglycerol--prolipoprotein diacylglyceryl transferase of Acinetobacter baumannii (strain AB307-0294).